The chain runs to 446 residues: D-inositol 3-phosphate glycosyltransferase (446 aa).

The segment at 1–21 (MSHYVGRLGRRSPAGSGRLRL) is disordered. Residue histidine 34 participates in 1D-myo-inositol 3-phosphate binding. Residues 40 to 41 (QP) and glycine 48 each bind UDP-N-acetyl-alpha-D-glucosamine. 1D-myo-inositol 3-phosphate-binding positions include 45–50 (DAGGMN), lysine 103, tyrosine 136, threonine 160, and arginine 180. 3 residues coordinate UDP-N-acetyl-alpha-D-glucosamine: arginine 255, lysine 260, and valine 321. Positions 330, 331, and 333 each coordinate Mg(2+). UDP-N-acetyl-alpha-D-glucosamine is bound by residues glutamate 343 and glutamate 351. A Mg(2+)-binding site is contributed by threonine 357.

The protein belongs to the glycosyltransferase group 1 family. MshA subfamily. As to quaternary structure, homodimer.

The catalysed reaction is 1D-myo-inositol 3-phosphate + UDP-N-acetyl-alpha-D-glucosamine = 1D-myo-inositol 2-acetamido-2-deoxy-alpha-D-glucopyranoside 3-phosphate + UDP + H(+). Its function is as follows. Catalyzes the transfer of a N-acetyl-glucosamine moiety to 1D-myo-inositol 3-phosphate to produce 1D-myo-inositol 2-acetamido-2-deoxy-glucopyranoside 3-phosphate in the mycothiol biosynthesis pathway. The sequence is that of D-inositol 3-phosphate glycosyltransferase from Streptomyces scabiei (strain 87.22).